We begin with the raw amino-acid sequence, 578 residues long: Adenine deaminase (578 aa).

The protein belongs to the metallo-dependent hydrolases superfamily. Adenine deaminase family. Mn(2+) is required as a cofactor.

The catalysed reaction is adenine + H2O + H(+) = hypoxanthine + NH4(+). The sequence is that of Adenine deaminase from Ligilactobacillus salivarius (strain UCC118) (Lactobacillus salivarius).